A 699-amino-acid chain; its full sequence is Protein Scribble homolog let-413 (699 aa).

LRR repeat units follow at residues 37–59 (KLEDLNLTMNNIKELDHRLFSLR), 60–81 (HLRILDVSDNELAVLPAEIGNL), 83–104 (QLIELNLNRNSIAKLPDTMQNC), 106–127 (LLTTLNLSSNPFTRLPETICEC), 129–150 (SITILSLNETSLTLLPSNIGSL), 152–174 (NLRVLEARDNLLRTIPLSIVELR), 175–196 (KLEELDLGQNELEALPAEIGKL), 198–219 (SLREFYVDINSLTSLPDSISGC), 221–242 (MLDQLDVSENQIIRLPENLGRM), 244–265 (NLTDLNISINEIIELPSSFGEL), 267–288 (RLQMLKADRNSLHNLTSEIGKC), 290–311 (SLTELYLGQNFLTDLPDTIGDL), 313–334 (QLTTLNVDCNNLSDIPDTIGNC), 336–357 (SLTVLSLRQNILTELPMTIGKC), 359–380 (NLTVLDVASNKLPHLPFTVKVL), and 382–403 (KLQALWLSENQTQSILKLSETR). In terms of domain architecture, PDZ spans 584 to 665 (AGGTSNDPAP…RSPSPVSRTS (82 aa)). A disordered region spans residues 656–699 (RSPSPVSRTSEPSLNGSSHQLNHFDAGSPDSTMFVTSSTPVYAS). Polar residues-rich tracts occupy residues 659-676 (SPVSRTSEPSLNGSSHQL) and 684-699 (PDSTMFVTSSTPVYAS).

It belongs to the LAP (LRR and PDZ) protein family. As to expression, expressed in the terminal web of the intestine. Expressed in seam cells. Expressed in the basolateral surfaces of epithelia and the nervous system. Expressed in the intestine, epidermis, excretory canal, reproductive system including vulva, uterus and spermatheca, in both larval and adult stage animals.

It localises to the basolateral cell membrane. Its function is as follows. Critical role in assembling adherens junctions; adapter protein involved in polarizing protein trafficking in epithelial cells. Necessary to maintain, not establish, the entire terminal web (organelle-depleted, intermediate filament-rich layer of cytoplasm that underlies the apical microvilli of polarized epithelial cells) or brush border assembly at the apical surface gut cells. Required for correct localization of ifb-2 intermediate filaments in the terminal web. Required for dlg-1 and hmr-1 lateral localization. Maintains cell polarity by correctly positioning adherens junction protein components including ajm-1 and hmp-1 at discrete subapical positions. Plays a role in the correct localization of the dlg-1-ajm-1 complex, polarity protein par-3, and actin microfilament to the apical junction of spermatheca cells, and is required for ovulation. Regulates the establishment of newly-formed epithelia in conjunction with dlg-1. Required in the epidermis during larval development. Plays a role in cellular junction integrity and in the directed outgrowth of seam cells, towards neighboring seam cells, during larval development; probably acts by promoting the assembly and stability of dlg-1 at apical junctions. The chain is Protein Scribble homolog let-413 from Caenorhabditis elegans.